The following is a 272-amino-acid chain: Magnetosome protein MamQ (272 aa).

At 1 to 46 (MAVSDADASSVDKVESITLQRVKQSEELLAQLYVVEESPRRMGRGP) the chain is on the cytoplasmic side. A helical membrane pass occupies residues 47–67 (VQLMLAISVLSLVAFITTLLM). At 68–272 (RYNAFVTMYE…PLTHSQESKN (205 aa)) the chain is on the lumenal side.

The protein belongs to the LemA family.

It localises to the magnetosome membrane. Its subcellular location is the cell inner membrane. Its function is as follows. Essential for magnetosome formation. Not essential for formation of magnetosome membrane vesicles. One of 7 genes (mamLQBIEMO) able to induce magnetosome membrane biogenesis; coexpression of mamLQRBIEMO in a deletion of the 17 gene mamAB operon restores magnetosome vesicle formation but not magnetite biosynthesis. This Magnetospirillum gryphiswaldense (strain DSM 6361 / JCM 21280 / NBRC 15271 / MSR-1) protein is Magnetosome protein MamQ.